Consider the following 908-residue polypeptide: DNA mismatch repair protein MutS (908 aa).

662-669 is an ATP binding site; that stretch reads GPNMGGKS.

Belongs to the DNA mismatch repair MutS family.

In terms of biological role, this protein is involved in the repair of mismatches in DNA. It is possible that it carries out the mismatch recognition step. This protein has a weak ATPase activity. The sequence is that of DNA mismatch repair protein MutS from Rhizobium johnstonii (strain DSM 114642 / LMG 32736 / 3841) (Rhizobium leguminosarum bv. viciae).